A 360-amino-acid polypeptide reads, in one-letter code: Catabolic L-serine/threonine dehydratase (360 aa).

Position 2 is an N-acetylserine (Ser-2). Lys-37 is modified (N6-(pyridoxal phosphate)lysine).

This sequence belongs to the serine/threonine dehydratase family. The cofactor is pyridoxal 5'-phosphate.

The protein resides in the mitochondrion. It catalyses the reaction L-serine = pyruvate + NH4(+). It carries out the reaction L-threonine = 2-oxobutanoate + NH4(+). The protein is Catabolic L-serine/threonine dehydratase (CHA1) of Saccharomyces cerevisiae (strain ATCC 204508 / S288c) (Baker's yeast).